We begin with the raw amino-acid sequence, 496 residues long: Mothers against decapentaplegic homolog 6 (496 aa).

A compositionally biased stretch (basic residues) spans 1-15 (MFRSKRSGLVRRLWR). Disordered regions lie at residues 1–116 (MFRS…PGWL) and 136–156 (GAPRDASDPLAGAALEPAGGG). A dimethylated arginine; alternate mark is found at arginine 75 and arginine 82. Arginine 75 and arginine 82 each carry omega-N-methylarginine; alternate. The 128-residue stretch at 148-275 (AALEPAGGGR…FSRLCGPESP (128 aa)) folds into the MH1 domain. Residue lysine 173 forms a Glycyl lysine isopeptide (Lys-Gly) (interchain with G-Cter in ubiquitin) linkage. Positions 205, 247, 260, and 265 each coordinate Zn(2+). One can recognise an MH2 domain in the interval 331–496 (WCSVAYWEHR…WLEILLNNPR (166 aa)). At serine 435 the chain carries Phosphoserine; by PRKX; in vitro.

It belongs to the dwarfin/SMAD family. Interacts with NEDD4L. Interacts with WWP1. Interacts with STAMBP and PRKX. Interacts with RNF111 and AXIN1. Interacts with TGF-beta type I receptor superfamily members, including ACVR1B, BMPR1B and TGFBR1. In response to BMP2, but not to TGFB treatment, interacts with SMAD1, but not with SMAD2, nor with SMAD4; this interaction may inhibit SMAD1 binding to SMAD4. Interacts with HOXC8 and HOXC9. Interacts with PELI1; this interaction interferes with PELI1 complex formation with TRAF6, IRAK1, IRAK4 and MYD88 in response to IL1B and hence negatively regulates IL1R-TLR signaling. Interacts with TSC22D1/TSC-22. In terms of processing, phosphorylated by BMP type 1 receptor kinase and by PRKX. Monoubiquitinated at Lys-173 by the E2/E3 hybrid ubiquitin-protein ligase UBE2O, leading to reduced binding affinity for the activated BMP type I receptor ACVR1/ALK2, thereby enhancing BMP7 and regulating adipocyte differentiation. Ubiquitinated by WWP1. Ubiquitinated by ARK2C, promoting proteasomal degradation, leading to enhance the BMP-Smad signaling. Post-translationally, arginine methylation by PRMT1, which is recruited by BMPR2, initiates BMP-Induced signaling and induces dissociation from the BMPR1B receptor at the cell surface leading to derepress downstream Smad1/Smad5 signaling. Expressed in the brain, heart, ovary, peripheral blood leukocytes, small intestine, spleen, thymus, bone marrow, fetal liver and lymph nodes.

Its subcellular location is the nucleus. Functionally, transforming growth factor-beta superfamily receptors signaling occurs through the Smad family of intracellular mediators. SMAD6 is an inhibitory Smad (i-Smad) that negatively regulates signaling downstream of type I transforming growth factor-beta. Acts as a mediator of TGF-beta and BMP anti-inflammatory activities. Suppresses IL1R-TLR signaling through its direct interaction with PEL1, preventing NF-kappa-B activation, nuclear transport and NF-kappa-B-mediated expression of pro-inflammatory genes. Blocks the BMP-SMAD1 signaling pathway by competing with SMAD4 for receptor-activated SMAD1-binding. Binds to regulatory elements in target promoter regions. The chain is Mothers against decapentaplegic homolog 6 (SMAD6) from Homo sapiens (Human).